Here is a 142-residue protein sequence, read N- to C-terminus: Glycine-rich RNA-binding protein 1 (142 aa).

Positions 1 to 65 constitute an RRM domain; that stretch reads NSLHSAFSTY…RNITVNEAQS (65 aa). Residues 48–101 form a disordered region; that stretch reads MNGKELDGRNITVNEAQSRGGRGGGGGGGYGGGRGGGGGYGRRDGGGGGYGGGG. Over residues 67–101 the composition is skewed to gly residues; the sequence is GGRGGGGGGGYGGGRGGGGGYGRRDGGGGGYGGGG.

Its function is as follows. Possibly has a role in RNA transcription or processing during stress. The polypeptide is Glycine-rich RNA-binding protein 1 (GRP1) (Sorghum bicolor (Sorghum)).